Reading from the N-terminus, the 538-residue chain is Prickle planar cell polarity protein 3-A (538 aa).

The PET domain occupies 66-175 (SGSQRDSLCE…CVRPVSGTMS (110 aa)). LIM zinc-binding domains lie at 177–241 (TVCQ…ELKR), 242–302 (PRCL…LYAQ), and 305–366 (DSCG…NATP). Over residues 369–378 (SFSPSQTDLS) the composition is skewed to polar residues. Disordered stretches follow at residues 369–398 (SFSP…DGDS), 433–463 (RGAP…TRVT), and 475–538 (SVSL…CLLS). The span at 435-449 (APKEFSRECPNRRSL) shows a compositional bias: basic and acidic residues. The segment covering 451 to 463 (DLNSHTRTPTRVT) has biased composition (polar residues). 2 stretches are compositionally biased toward low complexity: residues 475-488 (SVSL…SSSS) and 514-523 (APPTHAPTST).

This sequence belongs to the prickle / espinas / testin family. In terms of assembly, interacts with vangl2 via its C-terminus. The vangl2-dependent membrane recruitment of prickle3 is a prerequisite for its polarization. Interacts with wtip. Wtip is involved in the recruitment of prickle3 to the basal body. In terms of tissue distribution, predominantly expressed in the epidermal ectoderm.

The protein resides in the cytoplasm. It localises to the cell membrane. Its subcellular location is the mitochondrion. Functionally, involved in the planar cell polarity (PCP) pathway that is essential for the polarization of epithelial cells during morphogenetic processes, including gastrulation and neurulation. PCP is maintained by two molecular modules, the global and the core modules. Proteins of the core module include the proteins Frizzled (Fz), Disheveled (Dsh), Van Gogh (Vang), Prickle (Pk), Flamingo (Fmi, Celsr) and Diego (Dgo). The core module proteins develop subcellular asymmetry, accumulating in two groups on opposite sides of epithelial cells. Distinct proximal (Vang, Pk and Fmi) and distal (Fz, Dsh, Dgo and Fmi) complexes segregate to opposite sides of the cell, where they interact with the opposite complex in the neighboring cell at or near the adherents junctions. Directional information to orient polarization with respect to the tissue axes is provided by the global module which involves Wnt proteins. Involved in the organization of the basal body. Involved in cilia growth and positioning. Required for proper assembly, stability, and function of mitochondrial membrane ATP synthase (mitochondrial complex V). This is Prickle planar cell polarity protein 3-A (prickle3-a) from Xenopus laevis (African clawed frog).